Consider the following 154-residue polypeptide: 6,7-dimethyl-8-ribityllumazine synthase (154 aa).

Residues Phe-23, 57-59, and 81-83 contribute to the 5-amino-6-(D-ribitylamino)uracil site; these read AFE and AVI. 86–87 is a (2S)-2-hydroxy-3-oxobutyl phosphate binding site; it reads AT. His-89 functions as the Proton donor in the catalytic mechanism. Phe-114 is a binding site for 5-amino-6-(D-ribitylamino)uracil. Arg-128 is a binding site for (2S)-2-hydroxy-3-oxobutyl phosphate.

This sequence belongs to the DMRL synthase family.

It carries out the reaction (2S)-2-hydroxy-3-oxobutyl phosphate + 5-amino-6-(D-ribitylamino)uracil = 6,7-dimethyl-8-(1-D-ribityl)lumazine + phosphate + 2 H2O + H(+). The protein operates within cofactor biosynthesis; riboflavin biosynthesis; riboflavin from 2-hydroxy-3-oxobutyl phosphate and 5-amino-6-(D-ribitylamino)uracil: step 1/2. Catalyzes the formation of 6,7-dimethyl-8-ribityllumazine by condensation of 5-amino-6-(D-ribitylamino)uracil with 3,4-dihydroxy-2-butanone 4-phosphate. This is the penultimate step in the biosynthesis of riboflavin. This is 6,7-dimethyl-8-ribityllumazine synthase from Nautilia profundicola (strain ATCC BAA-1463 / DSM 18972 / AmH).